Here is a 628-residue protein sequence, read N- to C-terminus: Hepatocyte nuclear factor 1-alpha (628 aa).

The dimerization stretch occupies residues 1–31; that stretch reads MVSKLSQLQTELLAALLESGLSKEALIQALG. One can recognise an HNF-p1 domain in the interval 1 to 32; it reads MVSKLSQLQTELLAALLESGLSKEALIQALGE. The segment at 47 to 79 is disordered; that stretch reads GESCGGTRGDLTELPNGLGETRGSEDDTDDDGE. At Ser-70 the chain carries Phosphoserine. Thr-74 bears the Phosphothreonine mark. The POU-specific atypical domain maps to 87 to 182; sequence KELENLSPEE…VAQQFTHAGQ (96 aa). Phosphoserine is present on Ser-93. Lys-117 is covalently cross-linked (Glycyl lysine isopeptide (Lys-Gly) (interchain with G-Cter in ubiquitin)). 4 interaction with DNA regions span residues 130 to 132, 143 to 149, 155 to 158, and 203 to 206; these read QRE, HLSQHLN, KTQK, and RFKW. Residues 183 to 205 form a disordered region; that stretch reads GGLIEEPTGDELPTKKGRRNRFK. The Nuclear localization signal signature appears at 197 to 205; it reads KKGRRNRFK. Residues 199 to 279 constitute a DNA-binding region (homeobox; HNF1-type); the sequence is GRRNRFKWGP…NRRKEEAFRH (81 aa). Residue Ser-247 is modified to Phosphoserine. Interaction with DNA regions lie at residues 263–265 and 270–273; these read RVY and NRRK. Disordered stretches follow at residues 284–338 and 541–585; these read DTYN…SSSG and FTSD…LSTS. Positions 288–298 are enriched in pro residues; that stretch reads GPPPGPGPGPA. Ser-313 carries the post-translational modification Phosphoserine. Polar residues-rich tracts occupy residues 324–338 and 558–575; these read QSAT…SSSG and SPAT…NIQH.

This sequence belongs to the HNF1 homeobox family. Binds DNA as a dimer. Heterotetramer with PCBD1; formed by a dimer of dimers. Interacts with PCBD1. Interacts with BHLHE41. Interacts with NR5A2. Interacts with SPOP; this interaction promotes ubiquitination and degradation of HNF1A. Ubiquitinated in s SPOP-dependent manner; leading to prteasomal degradation. Liver.

The protein resides in the nucleus. Its function is as follows. Transcriptional activator that regulates the tissue specific expression of multiple genes, especially in pancreatic islet cells and in liver. Binds to the inverted palindrome 5'-GTTAATNATTAAC-3'. Activates the transcription of CYP1A2, CYP2E1 and CYP3A11. This Rattus norvegicus (Rat) protein is Hepatocyte nuclear factor 1-alpha (Hnf1a).